A 100-amino-acid chain; its full sequence is Urease subunit gamma (100 aa).

It belongs to the urease gamma subunit family. In terms of assembly, heterotrimer of UreA (gamma), UreB (beta) and UreC (alpha) subunits. Three heterotrimers associate to form the active enzyme.

Its subcellular location is the cytoplasm. It catalyses the reaction urea + 2 H2O + H(+) = hydrogencarbonate + 2 NH4(+). It participates in nitrogen metabolism; urea degradation; CO(2) and NH(3) from urea (urease route): step 1/1. The sequence is that of Urease subunit gamma from Corynebacterium glutamicum (strain R).